We begin with the raw amino-acid sequence, 1516 residues long: MDNQQDKAIVASANGENTLINGVKENDSEDQDVAMKSFAALEAAAPIQPTPVAQKETLMYPRGLLPLPSKKPCMQSPPSPLGLIEAPEHAANSASVNAISLTSGIAKGLNTWSLPNECEKAPFAIMEPAGMSALNGDCLMQPSRTCLGCFMESKDAVDPEPGISLKVGDLNRDYETCAVSDIGIQCINAGENMKYGEQLLSDQLLGFPLHKSRAGDRRETEKPDIDLEDPAQKSYYEALLLDKCNTEEALLANSNQDWGYFETFISESKIELLDLCSKNELSVNLFSEEDVDNYMFDDDESTLGSDVCSLKIRYESFQDNVRDKTTLLMQEDAQFNFFPSVFTTCPKRESKSGALKQSSDFSQFKVPDVSIIWGEEDKNLDKKKGKEEGQEDKGVEKKDGKDNGEKPALNKPCSGTEVEQLKNPKQGHLANSLETSGSFSDDSSFIEISYDAMGEIKDCSRYMARDTNSGSSSSQQNYGLRAKRKVRYSEDYLYDVDSLEGEKVNERKEWLPVGSKEEDDDEWCPKKRRKVTRKEPPVIIKYIIINRFKGEKNMLVKLGKVDASETTVNLSENQLNKYAKLAPLKGFWQKKKKQRNTNTDSIKTPFSQKQSFEPGSFEVSFLPPARKRKSKLGNRHRIQRIPSIEISASSKQISLCNDQRHASNHKEDGGLKGTLKSAPLGAPSCANGSHLNDITGPDSVKVKAQDTEFKGPERKVLNKIKFKSEARLKSKKVKAAGQESKPIVQMSPLLENQSSKANLKNEVIPGTSNSSRLSEFHEAKAAKSSTFLPTTCSSEMPLSSANVTTNIPVIPGGYLQTLLDASDLSNNTSISYFSHHSPEQNEGSLTQTEKSFVPLQPTQDCVLTSSSDSELQQSSHNFKMESSNYRNVWPNKATSGTQEFMAEVSREIAPTQSSEFGASQVVSMENNLTPTTYNPICLNSGGSNCNKVLYDSMQDTQLPSDDSYQLCHFNNGEICFPFQQGPVNMDDGRLFSFDSMAPLSVSSSNYCSLSLKSCEKDGDDDITDDFLAHCSPKLVIQQSIDEIAPLKESTDLLDISNFTPDKFRHSSLSEMSPPDTPSLSPQITRCESMKTLGTLKGFQEGVPGPLDSVEKIKWDCSTLSRQVQMEDGFTLNNHQFQFHMFNDEDSVSLLQKNPCLSTFNDPSGQISTNNKVSKSRKKSSPSKSGAMNQSSSQKNTRKKSLKGNNKGIEKPPGKNSRQVPKSTKKGKYMAAINGEKMQIGIGRGGSQTNTISSTGKTLAECIQHGGPMASMKMPSQKGLSGDWALGKESSPGWSDMSMGTNTNSLLDDDQREFQEPSYILSNIASGMADVQRFMMASIEPLWEPMEHHGDPNIFYSPESNSLKLKTLKILAGTPQESKKKINSGSQGATKNHRSIKGVSKSNGKTAIGDPGRANMPGYNEDSRSTFFDKKYSNMSTLGNNGPTHKKLYRHKSSSKALRDEKCKGKHMEREQVHKDESGTASFEKLRDSDYNLLKAETTFWVLPVFEEETRIFQKDI.

A compositionally biased stretch (basic and acidic residues) spans 380 to 405 (LDKKKGKEEGQEDKGVEKKDGKDNGE). Disordered regions lie at residues 380–440 (LDKK…GSFS), 589–610 (QKKK…SQKQ), 1158–1225 (TFND…STKK), 1373–1419 (TPQE…PGYN), and 1437–1479 (LGNN…ESGT). 3 stretches are compositionally biased toward polar residues: residues 596 to 610 (NTNT…SQKQ), 1158 to 1170 (TFND…STNN), and 1185 to 1194 (GAMNQSSSQK). Basic residues predominate over residues 1443–1453 (THKKLYRHKSS). Basic and acidic residues predominate over residues 1456–1479 (ALRDEKCKGKHMEREQVHKDESGT).

As to expression, highly expressed in fetal and adult brain, predominantly in the cerebral cortex and the cerebellum. Also expressed in other tissues but to a lesser extent.

It localises to the nucleus. The protein resides in the cytoplasm. In terms of biological role, involved in neurite outgrowth by regulating cell-cell adhesion via the N-cadherin signaling pathway. May act by regulating expression of protein-coding genes, such as N-cadherins and integrin beta-1 (ITGB1). The sequence is that of Neurite extension and migration factor from Homo sapiens (Human).